The following is a 151-amino-acid chain: Large ribosomal subunit protein bL9 (151 aa).

It belongs to the bacterial ribosomal protein bL9 family.

Binds to the 23S rRNA. This chain is Large ribosomal subunit protein bL9, found in Nitrosospira multiformis (strain ATCC 25196 / NCIMB 11849 / C 71).